The primary structure comprises 938 residues: ATP-dependent RNA helicase DDX42 (938 aa).

The segment covering 1–18 has biased composition (gly residues); sequence MNWNKGGPGTKRGFGFGG. The tract at residues 1-114 is disordered; sequence MNWNKGGPGT…KPVDSDSDDD (114 aa). N6-acetyllysine is present on K5. The residue at position 12 (R12) is an Omega-N-methylarginine. Positions 35-52 are enriched in low complexity; sequence SHSAFGATSSSSGFGKSA. S58 carries the post-translational modification Phosphoserine. Residues 70–84 show a composition bias toward acidic residues; that stretch reads DEENAYFEDEEEDSS. A phosphoserine mark is found at S96, S104, S109, and S111. Residues 116–157 are a coiled coil; the sequence is LEAFMAEVEDQAARDMKRLEEKDKERKNVKGIRDDIEEEDDQ. Residues 182–203 form a disordered region; that stretch reads EYDSDGNPIAPTKKIIDPLPPI. S185 carries the post-translational modification Phosphoserine. Residues 253-281 carry the Q motif motif; the sequence is SSFAHFGFDEQLMHQIRKSEYTQPTPIQC. One can recognise a Helicase ATP-binding domain in the interval 284 to 459; that stretch reads VPVALSGRDM…RDILIDPIRV (176 aa). An ATP-binding site is contributed by 297–304; the sequence is AKTGSGKT. A DEAD box motif is present at residues 407 to 410; the sequence is DEAD. The region spanning 487–632 is the Helicase C-terminal domain; sequence WLTRRLVEFT…HVSKELLDLA (146 aa). Composition is skewed to polar residues over residues 737–757 and 786–798; these read LNSV…SPVT and GVNN…NSRE. Residues 737-938 form a disordered region; the sequence is LNSVPTNSAQ…PKRKKSRWDS (202 aa). Residues 738-833 form a necessary for interaction with TP53BP2 region; that stretch reads NSVPTNSAQQ…TGNRHSDSPR (96 aa). S754 carries the post-translational modification Phosphoserine. A compositionally biased stretch (basic and acidic residues) spans 820 to 920; sequence SHGETGNRHS…KVDSKTDKTA (101 aa). K899 is covalently cross-linked (Glycyl lysine isopeptide (Lys-Gly) (interchain with G-Cter in SUMO2)).

Belongs to the DEAD box helicase family. DDX42 subfamily. In terms of assembly, transient component of the SF3B subcomplex of the 17S U2 SnRNP complex. Interacts (via the C-terminus) with TP53BP2; the interaction is not inhibitied by TP53BP2 ubiquitination and is independent of p53/TP53. Expressed in several cell lines (at protein level). Expressed in liver, lung, tonsil, thymus, muscle and pancreatic islets.

It localises to the cytoplasm. The protein resides in the nucleus. Its subcellular location is the cajal body. It is found in the nucleus speckle. The enzyme catalyses ATP + H2O = ADP + phosphate + H(+). ATP-dependent RNA helicase that binds to partially double-stranded RNAs (dsRNAs) in order to unwind RNA secondary structures. Unwinding is promoted in the presence of single-strand binding proteins. Also mediates RNA duplex formation thereby displacing the single-strand RNA binding protein. ATP and ADP modulate its activity: ATP binding and hydrolysis by DDX42 triggers RNA strand separation, whereas the ADP-bound form of the protein triggers annealing of complementary RNA strands. Required for assembly of the 17S U2 SnRNP complex of the spliceosome, a large ribonucleoprotein complex that removes introns from transcribed pre-mRNAs: DDX42 associates transiently with the SF3B subcomplex of the 17S U2 SnRNP complex and is released after fulfilling its role in the assembly of 17S U2 SnRNP. Involved in the survival of cells by interacting with TP53BP2 and thereby counteracting the apoptosis-stimulating activity of TP53BP2. Relocalizes TP53BP2 to the cytoplasm. The chain is ATP-dependent RNA helicase DDX42 from Homo sapiens (Human).